We begin with the raw amino-acid sequence, 95 residues long: Aspartyl/glutamyl-tRNA(Asn/Gln) amidotransferase subunit C (95 aa).

The protein belongs to the GatC family. Heterotrimer of A, B and C subunits.

It carries out the reaction L-glutamyl-tRNA(Gln) + L-glutamine + ATP + H2O = L-glutaminyl-tRNA(Gln) + L-glutamate + ADP + phosphate + H(+). It catalyses the reaction L-aspartyl-tRNA(Asn) + L-glutamine + ATP + H2O = L-asparaginyl-tRNA(Asn) + L-glutamate + ADP + phosphate + 2 H(+). Functionally, allows the formation of correctly charged Asn-tRNA(Asn) or Gln-tRNA(Gln) through the transamidation of misacylated Asp-tRNA(Asn) or Glu-tRNA(Gln) in organisms which lack either or both of asparaginyl-tRNA or glutaminyl-tRNA synthetases. The reaction takes place in the presence of glutamine and ATP through an activated phospho-Asp-tRNA(Asn) or phospho-Glu-tRNA(Gln). The chain is Aspartyl/glutamyl-tRNA(Asn/Gln) amidotransferase subunit C from Bartonella quintana (strain Toulouse) (Rochalimaea quintana).